Consider the following 311-residue polypeptide: Olfactory receptor 10G8 (311 aa).

Topologically, residues 1–23 (MSNASLLTAFILMGLPHAPALDA) are extracellular. The N-linked (GlcNAc...) asparagine glycan is linked to Asn3. The chain crosses the membrane as a helical span at residues 24–44 (PLFGVFLVVYVLTVLGNLLIL). Over 45-52 (LVIRVDSH) the chain is Cytoplasmic. The helical transmembrane segment at 53-73 (LHTTMYYFLTNLSFIDMWFST) threads the bilayer. At 74-98 (VTVPKLLMTLVFPSGRAISFHSCMA) the chain is on the extracellular side. The cysteines at positions 96 and 188 are disulfide-linked. A helical transmembrane segment spans residues 99–119 (QLYFFHFLGGTECFLYRVMSC). The Cytoplasmic segment spans residues 120-138 (DRYLAISYPLRYTSMMTGR). Residues 139 to 159 (SCTLLATSTWLSGSLHSAVQA) form a helical membrane-spanning segment. Topologically, residues 160 to 196 (ILTFHLPYCGPNWIQHYLCDAPPILKLACADTSAIET) are extracellular. A helical transmembrane segment spans residues 197 to 216 (VIFVTVGIVASGCFVLIVLS). The Cytoplasmic segment spans residues 217-236 (YVSIVCSILRIRTSEGKHRA). The helical transmembrane segment at 237-257 (FQTCASHCIVVLCFFGPGLFI) threads the bilayer. At 258 to 268 (YLRPGSRKAVD) the chain is on the extracellular side. A helical membrane pass occupies residues 269 to 289 (GVVAVFYTVLTPLLNPVVYTL). Topologically, residues 290 to 311 (RNKEVKKALLKLKDKVAHSQSK) are cytoplasmic.

Belongs to the G-protein coupled receptor 1 family.

The protein localises to the cell membrane. Odorant receptor. The sequence is that of Olfactory receptor 10G8 (OR10G8) from Homo sapiens (Human).